A 690-amino-acid polypeptide reads, in one-letter code: Heterogeneous nuclear ribonucleoprotein M (690 aa).

Low complexity predominate over residues 1 to 13 (MAAGVEAAAEVAA). The interval 1–63 (MAAGVEAAAE…KRGGNRFEPY (63 aa)) is disordered. N-acetylalanine is present on alanine 2. A Glycyl lysine isopeptide (Lys-Gly) (interchain with G-Cter in SUMO2) cross-link involves residue lysine 17. At serine 29 the chain carries Phosphoserine. Residues lysine 37, lysine 68, and lysine 82 each participate in a glycyl lysine isopeptide (Lys-Gly) (interchain with G-Cter in SUMO2) cross-link. Residues 37–49 (KGEERPTQNEKRK) show a composition bias toward basic and acidic residues. RRM domains follow at residues 70-148 (YRAF…EDPD) and 164-241 (STVF…MDER). Serine 85 carries the phosphoserine modification. Glycyl lysine isopeptide (Lys-Gly) (interchain with G-Cter in SUMO2) cross-links involve residues lysine 87 and lysine 126. At lysine 133 the chain carries N6-acetyllysine; alternate. A Glycyl lysine isopeptide (Lys-Gly) (interchain with G-Cter in SUMO2); alternate cross-link involves residue lysine 133. Residues lysine 142 and lysine 144 each participate in a glycyl lysine isopeptide (Lys-Gly) (interchain with G-Cter in SUMO2) cross-link. Serine 164 is modified (phosphoserine). Lysine 181 participates in a covalent cross-link: Glycyl lysine isopeptide (Lys-Gly) (interchain with G-Cter in SUMO2). N6-acetyllysine; alternate is present on lysine 237. Lysine 237 participates in a covalent cross-link: Glycyl lysine isopeptide (Lys-Gly) (interchain with G-Cter in SUMO2); alternate. Residues lysine 245 and lysine 305 each participate in a glycyl lysine isopeptide (Lys-Gly) (interchain with G-Cter in SUMO2) cross-link. Serine 325 and serine 337 each carry phosphoserine. Glycyl lysine isopeptide (Lys-Gly) (interchain with G-Cter in SUMO2) cross-links involve residues lysine 341 and lysine 348. Phosphoserine is present on serine 357. Repeat copies occupy residues 360 to 365 (GIERMG), 367 to 372 (GIDRIS), 375 to 380 (GMERMG), and 386 to 391 (GMDRVG). The interval 360–568 (GIERMGPGID…ALGAGIERMG (209 aa)) is 27 X 6 AA repeats of [GEVSTPAN]-[ILMV]-[DE]-[RH]-[MLVI]-[GAV]. Serine 392 bears the Phosphoserine mark. 3 repeat units span residues 393–398 (EIERMG), 400–405 (VMDRMG), and 406–411 (SVERMG). Position 412 is a phosphoserine (serine 412). 4 repeat units span residues 413–418 (GIERMG), 421–426 (GLDHMA), 428–433 (SIERMG), and 435–440 (TMERIG). Phosphoserine is present on serine 428. Serine 441 is subject to Phosphoserine. Tandem repeats lie at residues 442 to 447 (GVERMG), 453 to 458 (GLERMA), 460 to 465 (PIDRVG), 467 to 472 (TIERMG), 474 to 479 (GVERMG), 481 to 486 (AIERMG), 488 to 493 (SMDRMV), 500 to 505 (GLERMG), 507 to 512 (VMDRMA), 514 to 519 (GLERMG), 522 to 527 (NLERMG), 528 to 532 (LERMG), 535 to 540 (SLERMG), 541 to 545 (LERMG), 548 to 553 (SLERMG), and 563 to 568 (GIERMG). Arginine 456 is modified (omega-N-methylarginine). The residue at position 488 (serine 488) is a Phosphoserine. Phosphoserine is present on serine 535. Serine 548 is modified (phosphoserine). Phosphoserine is present on residues serine 578, serine 593, and serine 597. Lysine 611 participates in a covalent cross-link: Glycyl lysine isopeptide (Lys-Gly) (interchain with G-Cter in SUMO2). The RRM 3 domain maps to 613-689 (CQIFVRNLPF…REIDVRIDRN (77 aa)). Threonine 625 is modified (phosphothreonine). Residue lysine 627 forms a Glycyl lysine isopeptide (Lys-Gly) (interchain with G-Cter in SUMO2) linkage. Lysine 632 carries the N6-acetyllysine modification. Residues lysine 645 and lysine 652 each participate in a glycyl lysine isopeptide (Lys-Gly) (interchain with G-Cter in SUMO2) cross-link. An N6-acetyllysine; alternate modification is found at lysine 658. Lysine 658 participates in a covalent cross-link: Glycyl lysine isopeptide (Lys-Gly) (interchain with G-Cter in SUMO2); alternate. Lysine 658 is covalently cross-linked (Glycyl lysine isopeptide (Lys-Gly) (interchain with G-Cter in SUMO1); alternate). Serine 661 is subject to Phosphoserine. Residue lysine 676 forms a Glycyl lysine isopeptide (Lys-Gly) (interchain with G-Cter in SUMO2) linkage.

In terms of assembly, identified in the spliceosome C complex. Interacts with PPIA/CYPA. Post-translationally, sumoylated. Expressed in all tissues tested, including liver, heart, lung, skeletal muscle, kidney, stomach, large intestine, small intestine, pancreas, spleen, peritoneal macrophage and thyroid.

The protein localises to the nucleus matrix. In terms of biological role, pre-mRNA binding protein, binds avidly to poly(G) and poly(U) RNA homopolymers. Involved in splicing. Acts as a receptor for carcinoembryonic antigen in Kupffer cells, may initiate a series of signaling events leading to tyrosine phosphorylation of proteins and induction of IL-1 alpha, IL-6, IL-10 and tumor necrosis factor alpha cytokines. The protein is Heterogeneous nuclear ribonucleoprotein M (Hnrnpm) of Rattus norvegicus (Rat).